The chain runs to 229 residues: Large ribosomal subunit protein uL1 (229 aa).

Belongs to the universal ribosomal protein uL1 family. Part of the 50S ribosomal subunit.

In terms of biological role, binds directly to 23S rRNA. The L1 stalk is quite mobile in the ribosome, and is involved in E site tRNA release. Its function is as follows. Protein L1 is also a translational repressor protein, it controls the translation of the L11 operon by binding to its mRNA. This Histophilus somni (strain 2336) (Haemophilus somnus) protein is Large ribosomal subunit protein uL1.